The sequence spans 378 residues: UPF0754 membrane protein BCG9842_B4423 (378 aa).

The helical transmembrane segment at 357 to 377 (YLGALLGGIIGLVQGLLLLFL) threads the bilayer.

The protein belongs to the UPF0754 family.

It is found in the cell membrane. The protein is UPF0754 membrane protein BCG9842_B4423 of Bacillus cereus (strain G9842).